The following is a 502-amino-acid chain: ATP synthase subunit alpha (502 aa).

Glycine 170–threonine 177 provides a ligand contact to ATP.

The protein belongs to the ATPase alpha/beta chains family. F-type ATPases have 2 components, CF(1) - the catalytic core - and CF(0) - the membrane proton channel. CF(1) has five subunits: alpha(3), beta(3), gamma(1), delta(1), epsilon(1). CF(0) has four main subunits: a, b, b' and c.

The protein localises to the cellular thylakoid membrane. The enzyme catalyses ATP + H2O + 4 H(+)(in) = ADP + phosphate + 5 H(+)(out). Produces ATP from ADP in the presence of a proton gradient across the membrane. The alpha chain is a regulatory subunit. This Microcystis aeruginosa (strain NIES-843 / IAM M-2473) protein is ATP synthase subunit alpha.